A 145-amino-acid chain; its full sequence is Ribosome-binding factor A (145 aa).

Residues lysine 122–arginine 132 are compositionally biased toward basic and acidic residues. The tract at residues lysine 122 to aspartate 145 is disordered.

The protein belongs to the RbfA family. In terms of assembly, monomer. Binds 30S ribosomal subunits, but not 50S ribosomal subunits or 70S ribosomes.

Its subcellular location is the cytoplasm. In terms of biological role, one of several proteins that assist in the late maturation steps of the functional core of the 30S ribosomal subunit. Associates with free 30S ribosomal subunits (but not with 30S subunits that are part of 70S ribosomes or polysomes). Required for efficient processing of 16S rRNA. May interact with the 5'-terminal helix region of 16S rRNA. The chain is Ribosome-binding factor A from Methylorubrum extorquens (strain PA1) (Methylobacterium extorquens).